We begin with the raw amino-acid sequence, 241 residues long: 2-C-methyl-D-erythritol 4-phosphate cytidylyltransferase (241 aa).

Belongs to the IspD/TarI cytidylyltransferase family. IspD subfamily.

It carries out the reaction 2-C-methyl-D-erythritol 4-phosphate + CTP + H(+) = 4-CDP-2-C-methyl-D-erythritol + diphosphate. The protein operates within isoprenoid biosynthesis; isopentenyl diphosphate biosynthesis via DXP pathway; isopentenyl diphosphate from 1-deoxy-D-xylulose 5-phosphate: step 2/6. Its function is as follows. Catalyzes the formation of 4-diphosphocytidyl-2-C-methyl-D-erythritol from CTP and 2-C-methyl-D-erythritol 4-phosphate (MEP). This Hahella chejuensis (strain KCTC 2396) protein is 2-C-methyl-D-erythritol 4-phosphate cytidylyltransferase.